Here is a 309-residue protein sequence, read N- to C-terminus: NAD kinase (309 aa).

Catalysis depends on D89, which acts as the Proton acceptor. NAD(+) contacts are provided by residues 89 to 90, 163 to 164, H174, R191, D193, and 204 to 209; these read DG, NE, and TAYSLS.

This sequence belongs to the NAD kinase family. A divalent metal cation serves as cofactor.

It is found in the cytoplasm. It catalyses the reaction NAD(+) + ATP = ADP + NADP(+) + H(+). Functionally, involved in the regulation of the intracellular balance of NAD and NADP, and is a key enzyme in the biosynthesis of NADP. Catalyzes specifically the phosphorylation on 2'-hydroxyl of the adenosine moiety of NAD to yield NADP. The sequence is that of NAD kinase from Shewanella piezotolerans (strain WP3 / JCM 13877).